The following is a 291-amino-acid chain: Glycine--tRNA ligase alpha subunit (291 aa).

Belongs to the class-II aminoacyl-tRNA synthetase family. Tetramer of two alpha and two beta subunits.

The protein localises to the cytoplasm. The catalysed reaction is tRNA(Gly) + glycine + ATP = glycyl-tRNA(Gly) + AMP + diphosphate. This Nitratidesulfovibrio vulgaris (strain DSM 19637 / Miyazaki F) (Desulfovibrio vulgaris) protein is Glycine--tRNA ligase alpha subunit.